The sequence spans 112 residues: Protein ORF3 (112 aa).

2 hydrophobic regions span residues 7 to 23 (ALGLFCFCSSCFCLCCP) and 40 to 60 (AAVVSGVTGLILSPSPSPIFI). The interval 28–66 (VSRLAVAAGKRGAAVVSGVTGLILSPSPSPIFIQPTPSH) is interaction with host HPX. Residues 70–112 (QPPPGLELALGSQSVHSAPLGVTSPSAPPLPPVVDLPQLGLRR) are homodimerization, and interaction with host AMBP/bikunin. The tract at residues 89 to 112 (LGVTSPSAPPLPPVVDLPQLGLRR) is disordered. The interaction with host SRC, HCK, FYN, PIK3R3 and GRB2 stretch occupies residues 93–102 (SPSAPPLPPV). The PTAP/PSAP motif signature appears at 94 to 97 (PSAP).

The protein belongs to the hepevirus ORF3 protein family. In terms of assembly, forms homooligomers. Interacts with host SRC, HCK, FYN, PIK3R3 and GRB2 (via SH3 domain); binding does not activate the kinases. Interacts with host AMBP/bikunin and AMBP/alpha-1-microglobulin peptides. Interacts with host HPX/hemopexin. Interacts (when phosphorylated) with capsid protein ORF2. Interacts with host TSG101; this interaction plays a role in viral release from the host cell. Interacts with host SIRPA; this interaction down-regulates the phosphorylation of host IRF3. Post-translationally, palmitoylated in the N-terminus.

The protein resides in the host endoplasmic reticulum membrane. It is found in the host cytoplasm. It localises to the host cytoskeleton. The protein localises to the virion. Its subcellular location is the host cell membrane. Small multifunctional phosphoprotein involved in virion morphogenesis, egress and counteracting host innate immunity. Plays critical roles in the final steps of viral release by interacting with host TSG101, a member of the vacuolar protein-sorting pathway and using other cellular host proteins involved in vesicle formation pathway. Also acts as a viroporin and forms ion conductive pores allowing viral particle release. Impairs the generation of type I interferon by down-regulating host TLR3 and TLR7 as well as their downstream signaling pathways. Down-regulates the phosphorylation of host IRF3 via the interaction with host SIRP-alpha, thereby inhibiting IFN-I expression. Interacts with host microtubules. The protein is Protein ORF3 of Bandicota bengalensis (lesser bandicoot rat).